The sequence spans 452 residues: MPYIPHTPDDVRAMLDAIGADSIEDLFDEIPSHLKAAGKLDALPEGLSEMDVTRLMSDRAAQDAGAVSFIGAGAYQHHVPAAVWEIATRGEFYTAYTPYQAEASQGTLQVIYEFQTLMTRLTGMDVSNASVYDGASGLAEAVLMSLRANRKSKSRKVLVPTAVNPRYTSATQAIVENQDVALERVGFDAASGQTPLDALKPYEGEDYAALVISQPNFFGSLEEVDALTDWAHANKMLVIGVVNPTSLALLTPPGEWGADGADIVVGEGQPLGVPLSSGGPYFGFMCCKQKHVRQMPGRIIGRTVDMEGKQGFTLTLQAREQHIRRSKATSNICTNQGLAMTAATIYTSLLGPDGLGNVAAHCHANTQALADKLTAIDGVERAFTAPTFHEVVLTLPKPADQVLAALAEKDVLGGVSLAGDYDMNNAILVNATEVHSEQDLQLFEQALKEVLA.

This sequence belongs to the GcvP family. N-terminal subunit subfamily. In terms of assembly, the glycine cleavage system is composed of four proteins: P, T, L and H. In this organism, the P 'protein' is a heterodimer of two subunits.

It catalyses the reaction N(6)-[(R)-lipoyl]-L-lysyl-[glycine-cleavage complex H protein] + glycine + H(+) = N(6)-[(R)-S(8)-aminomethyldihydrolipoyl]-L-lysyl-[glycine-cleavage complex H protein] + CO2. In terms of biological role, the glycine cleavage system catalyzes the degradation of glycine. The P protein binds the alpha-amino group of glycine through its pyridoxal phosphate cofactor; CO(2) is released and the remaining methylamine moiety is then transferred to the lipoamide cofactor of the H protein. In Alcanivorax borkumensis (strain ATCC 700651 / DSM 11573 / NCIMB 13689 / SK2), this protein is Probable glycine dehydrogenase (decarboxylating) subunit 1.